Consider the following 547-residue polypeptide: Chaperonin GroEL (547 aa).

Residues 30-33 (TLGP), Lys-51, 87-91 (DGTTT), Gly-415, and Asp-496 each bind ATP. The disordered stretch occupies residues 525-547 (KPEPKSPAGGPGMGGMGGMDGMM). Positions 533 to 547 (GGPGMGGMGGMDGMM) are enriched in gly residues.

It belongs to the chaperonin (HSP60) family. As to quaternary structure, forms a cylinder of 14 subunits composed of two heptameric rings stacked back-to-back. Interacts with the co-chaperonin GroES.

It localises to the cytoplasm. The enzyme catalyses ATP + H2O + a folded polypeptide = ADP + phosphate + an unfolded polypeptide.. Functionally, together with its co-chaperonin GroES, plays an essential role in assisting protein folding. The GroEL-GroES system forms a nano-cage that allows encapsulation of the non-native substrate proteins and provides a physical environment optimized to promote and accelerate protein folding. The protein is Chaperonin GroEL of Cereibacter sphaeroides (strain ATCC 17029 / ATH 2.4.9) (Rhodobacter sphaeroides).